We begin with the raw amino-acid sequence, 351 residues long: Anthranilate phosphoribosyltransferase (351 aa).

5-phospho-alpha-D-ribose 1-diphosphate contacts are provided by residues Gly-84, Gly-87 to Asp-88, Asn-95 to Ser-98, Lys-113 to Ser-121, and Ala-125. Gly-84 is a binding site for anthranilate. Ser-97 provides a ligand contact to Mg(2+). Asn-116 is an anthranilate binding site. Residue Arg-171 participates in anthranilate binding. Residues Asp-229 and Lys-230 each coordinate Mg(2+).

The protein belongs to the anthranilate phosphoribosyltransferase family. As to quaternary structure, homodimer. Mg(2+) serves as cofactor.

It carries out the reaction N-(5-phospho-beta-D-ribosyl)anthranilate + diphosphate = 5-phospho-alpha-D-ribose 1-diphosphate + anthranilate. It functions in the pathway amino-acid biosynthesis; L-tryptophan biosynthesis; L-tryptophan from chorismate: step 2/5. In terms of biological role, catalyzes the transfer of the phosphoribosyl group of 5-phosphorylribose-1-pyrophosphate (PRPP) to anthranilate to yield N-(5'-phosphoribosyl)-anthranilate (PRA). In Clavibacter sepedonicus (Clavibacter michiganensis subsp. sepedonicus), this protein is Anthranilate phosphoribosyltransferase.